The sequence spans 295 residues: Tyrosine recombinase XerD (295 aa).

Residues 1–85 enclose the Core-binding (CB) domain; sequence MDTIIEEYLK…TIRSFHQFAL (85 aa). A Tyr recombinase domain is found at 106–289; the sequence is KLPDVLEINE…SKSQIRKMYN (184 aa). Active-site residues include Arg-146, Lys-170, His-241, Arg-244, and His-267. The O-(3'-phospho-DNA)-tyrosine intermediate role is filled by Tyr-276.

This sequence belongs to the 'phage' integrase family. XerD subfamily. In terms of assembly, forms a cyclic heterotetrameric complex composed of two molecules of XerC and two molecules of XerD.

It localises to the cytoplasm. Its function is as follows. Site-specific tyrosine recombinase, which acts by catalyzing the cutting and rejoining of the recombining DNA molecules. The XerC-XerD complex is essential to convert dimers of the bacterial chromosome into monomers to permit their segregation at cell division. It also contributes to the segregational stability of plasmids. The chain is Tyrosine recombinase XerD from Staphylococcus saprophyticus subsp. saprophyticus (strain ATCC 15305 / DSM 20229 / NCIMB 8711 / NCTC 7292 / S-41).